A 498-amino-acid polypeptide reads, in one-letter code: Glycerol kinase (498 aa).

T12 contributes to the ADP binding site. ATP-binding residues include T12, T13, and S14. Residue T12 participates in sn-glycerol 3-phosphate binding. R16 serves as a coordination point for ADP. Sn-glycerol 3-phosphate contacts are provided by R82, E83, Y134, and D243. Residues R82, E83, Y134, D243, and Q244 each coordinate glycerol. T265 and G308 together coordinate ADP. Residues T265, G308, Q312, and G412 each coordinate ATP. G412 is an ADP binding site.

Belongs to the FGGY kinase family.

It catalyses the reaction glycerol + ATP = sn-glycerol 3-phosphate + ADP + H(+). The protein operates within polyol metabolism; glycerol degradation via glycerol kinase pathway; sn-glycerol 3-phosphate from glycerol: step 1/1. Its activity is regulated as follows. Inhibited by fructose 1,6-bisphosphate (FBP). In terms of biological role, key enzyme in the regulation of glycerol uptake and metabolism. Catalyzes the phosphorylation of glycerol to yield sn-glycerol 3-phosphate. This chain is Glycerol kinase, found in Rhizobium rhizogenes (strain K84 / ATCC BAA-868) (Agrobacterium radiobacter).